The primary structure comprises 310 residues: Ribosomal protein uL3 glutamine methyltransferase (310 aa).

This sequence belongs to the protein N5-glutamine methyltransferase family. PrmB subfamily.

It carries out the reaction L-glutaminyl-[ribosomal protein uL3] + S-adenosyl-L-methionine = N(5)-methyl-L-glutaminyl-[ribosomal protein uL3] + S-adenosyl-L-homocysteine + H(+). In terms of biological role, methylates large ribosomal subunit protein uL3 on a specific glutamine residue. This chain is Ribosomal protein uL3 glutamine methyltransferase, found in Vibrio anguillarum (strain ATCC 68554 / 775) (Listonella anguillarum).